The chain runs to 397 residues: ATP-dependent RNA helicase eIF4A (397 aa).

Positions 24–52 (DSFDEMNLKPELLRGIYAYGFERPSAIQQ) match the Q motif motif. The 171-residue stretch at 55–225 (IMPVIKGHDV…TKFMREPVRI (171 aa)) folds into the Helicase ATP-binding domain. Position 68-75 (68-75 (AQSGTGKT)) interacts with ATP. The DEAD box motif lies at 173-176 (DEAD). The Helicase C-terminal domain maps to 236–397 (GIKQFYIAVE…EMPMNVADLI (162 aa)).

The protein belongs to the DEAD box helicase family. eIF4A subfamily. Component of the eIF4F complex, which composition varies with external and internal environmental conditions. It is composed of at least eIF4A, eIF4E and eIF4G.

It localises to the cytoplasm. The catalysed reaction is ATP + H2O = ADP + phosphate + H(+). Functionally, ATP-dependent RNA helicase which is a subunit of the eIF4F complex involved in cap recognition and is required for mRNA binding to ribosome. In the current model of translation initiation, eIF4A unwinds RNA secondary structures in the 5'-UTR of mRNAs which is necessary to allow efficient binding of the small ribosomal subunit, and subsequent scanning for the initiator codon. The polypeptide is ATP-dependent RNA helicase eIF4A (tif-1) (Neurospora crassa (strain ATCC 24698 / 74-OR23-1A / CBS 708.71 / DSM 1257 / FGSC 987)).